Here is a 247-residue protein sequence, read N- to C-terminus: Eukaryotic translation initiation factor 3 subunit J (247 aa).

Disordered stretches follow at residues M1–K64 and E77–M101. The segment covering E24–K45 has biased composition (acidic residues). Residues E43–Q108 adopt a coiled-coil conformation.

This sequence belongs to the eIF-3 subunit J family. In terms of assembly, component of the eukaryotic translation initiation factor 3 (eIF-3) complex.

The protein resides in the cytoplasm. Component of the eukaryotic translation initiation factor 3 (eIF-3) complex, which is involved in protein synthesis of a specialized repertoire of mRNAs and, together with other initiation factors, stimulates binding of mRNA and methionyl-tRNAi to the 40S ribosome. The eIF-3 complex specifically targets and initiates translation of a subset of mRNAs involved in cell proliferation. The chain is Eukaryotic translation initiation factor 3 subunit J from Nematostella vectensis (Starlet sea anemone).